The primary structure comprises 503 residues: Putative (R)-citramalate synthase CimA (503 aa).

The Pyruvate carboxyltransferase domain occupies 9–257 (IRFFDTTLRD…DTGIATEELY (249 aa)).

This sequence belongs to the alpha-IPM synthase/homocitrate synthase family. As to quaternary structure, homodimer.

It carries out the reaction pyruvate + acetyl-CoA + H2O = (3R)-citramalate + CoA + H(+). The protein operates within amino-acid biosynthesis; L-isoleucine biosynthesis; 2-oxobutanoate from pyruvate: step 1/3. Functionally, catalyzes the condensation of pyruvate and acetyl-coenzyme A to form (R)-citramalate. The protein is Putative (R)-citramalate synthase CimA of Methanoculleus marisnigri (strain ATCC 35101 / DSM 1498 / JR1).